We begin with the raw amino-acid sequence, 250 residues long: Manganese transport system ATP-binding protein MntB (250 aa).

The ABC transporter domain maps to 4 to 236 (VELDNVTVAY…NLQKTYGGRL (233 aa)). 36–43 (GPNGAGKS) is an ATP binding site.

Belongs to the ABC transporter superfamily. The complex is probably composed of two ATP-binding proteins (MntB), two transmembrane proteins (MntC and MntD) and a solute-binding protein (MntA).

The protein localises to the cell membrane. In terms of biological role, probably part of the ABC transporter complex MntABCD involved in manganese import. Probably responsible for energy coupling to the transport system. In Bacillus subtilis (strain 168), this protein is Manganese transport system ATP-binding protein MntB.